The primary structure comprises 985 residues: Invasin (985 aa).

Residues 494–594 (SVTVQQPQLT…RQSVDTHFVK (101 aa)) form a D1 region. Residues 494 to 985 (SVTVQQPQLT…LAFPLCALAI (492 aa)) lie on the Extracellular side of the membrane. Big-1 domains are found at residues 503–594 (TLTA…HFVK) and 601–691 (KSTL…VNFT). The segment at 595–694 (GTIAADKSTL…SVTVNFTADP (100 aa)) is D2. The interval 695-794 (IPDAGRSSFT…LQKKISLFPV (100 aa)) is D3. Positions 795 to 886 (PTLTGILVNG…YSVSYRFYPN (92 aa)) are D4. The integrin-binding stretch occupies residues 795–985 (PTLTGILVNG…LAFPLCALAI (191 aa)). Residues 887-985 (RWIYDGGTSL…LAFPLCALAI (99 aa)) are D5. Residues C906 and C981 are joined by a disulfide bond.

It belongs to the intimin/invasin family.

It localises to the cell surface. Invasin is a protein that allows enteric bacteria to penetrate cultured mammalian cells. The entry of invasin in the cell is mediated by binding several beta-1 chain integrins. In Yersinia pseudotuberculosis serotype I (strain IP32953), this protein is Invasin.